A 1032-amino-acid polypeptide reads, in one-letter code: uncharacterized protein (1032 aa).

Disordered regions lie at residues 54-80 (NNNN…NNNN), 391-451 (QLQI…QTHL), and 884-934 (INNE…SKVK). Over residues 884–907 (INNENNNENNNNYNGNINSNNNNN) the composition is skewed to low complexity.

This is an uncharacterized protein from Dictyostelium discoideum (Social amoeba).